We begin with the raw amino-acid sequence, 843 residues long: Translation initiation factor IF-2 (843 aa).

Disordered stretches follow at residues 50–72 (LKSS…KTTS) and 94–260 (QRSP…TGPV). Residues 96–135 (SPEEIQAEQKREQDERRAAENAARDKVDADVRQRNEEQAR) are compositionally biased toward basic and acidic residues. The span at 139–173 (TATAAAAPAAKAEPAPAAAAPAPAPVVADAPASED) shows a compositional bias: low complexity. 2 stretches are compositionally biased toward basic and acidic residues: residues 174 to 203 (AAAR…RGEA) and 227 to 236 (TTDEESDGAR). Positions 237-250 (RGRGGKGKLKKRNQ) are enriched in basic residues. Positions 343 to 516 (SRAPVVTVMG…EVLELTATPT (174 aa)) constitute a tr-type G domain. Residues 352–359 (GHVDHGKT) form a G1 region. Residue 352–359 (GHVDHGKT) coordinates GTP. The segment at 377-381 (GITQH) is G2. The tract at residues 398–401 (DTPG) is G3. Residues 398-402 (DTPGH) and 452-455 (NKID) each bind GTP. Residues 452–455 (NKID) are G4. A G5 region spans residues 488–490 (SAK).

The protein belongs to the TRAFAC class translation factor GTPase superfamily. Classic translation factor GTPase family. IF-2 subfamily.

Its subcellular location is the cytoplasm. In terms of biological role, one of the essential components for the initiation of protein synthesis. Protects formylmethionyl-tRNA from spontaneous hydrolysis and promotes its binding to the 30S ribosomal subunits. Also involved in the hydrolysis of GTP during the formation of the 70S ribosomal complex. The sequence is that of Translation initiation factor IF-2 from Pseudomonas putida (strain W619).